The sequence spans 440 residues: Adenylosuccinate synthetase (440 aa).

GTP contacts are provided by residues 12–18 and 40–42; these read GDEGKGK and GHT. Aspartate 13 (proton acceptor) is an active-site residue. 2 residues coordinate Mg(2+): aspartate 13 and glycine 40. IMP contacts are provided by residues 13 to 16, 38 to 41, threonine 128, arginine 142, glutamine 223, threonine 238, and arginine 302; these read DEGK and NAGH. The active-site Proton donor is histidine 41. Substrate is bound at residue 298-304; it reads TTTGRPR. GTP contacts are provided by residues arginine 304, 330 to 332, and 412 to 414; these read KLD and SVG.

The protein belongs to the adenylosuccinate synthetase family. As to quaternary structure, homodimer. The cofactor is Mg(2+).

The protein localises to the cytoplasm. The catalysed reaction is IMP + L-aspartate + GTP = N(6)-(1,2-dicarboxyethyl)-AMP + GDP + phosphate + 2 H(+). It functions in the pathway purine metabolism; AMP biosynthesis via de novo pathway; AMP from IMP: step 1/2. In terms of biological role, plays an important role in the de novo pathway of purine nucleotide biosynthesis. Catalyzes the first committed step in the biosynthesis of AMP from IMP. In Gloeobacter violaceus (strain ATCC 29082 / PCC 7421), this protein is Adenylosuccinate synthetase.